A 351-amino-acid polypeptide reads, in one-letter code: UDP-3-O-acylglucosamine N-acyltransferase (351 aa).

His-257 serves as the catalytic Proton acceptor.

This sequence belongs to the transferase hexapeptide repeat family. LpxD subfamily. Homotrimer.

It carries out the reaction a UDP-3-O-[(3R)-3-hydroxyacyl]-alpha-D-glucosamine + a (3R)-hydroxyacyl-[ACP] = a UDP-2-N,3-O-bis[(3R)-3-hydroxyacyl]-alpha-D-glucosamine + holo-[ACP] + H(+). Its pathway is bacterial outer membrane biogenesis; LPS lipid A biosynthesis. In terms of biological role, catalyzes the N-acylation of UDP-3-O-acylglucosamine using 3-hydroxyacyl-ACP as the acyl donor. Is involved in the biosynthesis of lipid A, a phosphorylated glycolipid that anchors the lipopolysaccharide to the outer membrane of the cell. This chain is UDP-3-O-acylglucosamine N-acyltransferase, found in Methylorubrum extorquens (strain CM4 / NCIMB 13688) (Methylobacterium extorquens).